Here is a 148-residue protein sequence, read N- to C-terminus: Deoxyuridine 5'-triphosphate nucleotidohydrolase (148 aa).

Residues 67 to 69, Asn-80, 84 to 86, and Met-94 contribute to the substrate site; these read RSG and LID.

It belongs to the dUTPase family. The cofactor is Mg(2+).

It carries out the reaction dUTP + H2O = dUMP + diphosphate + H(+). It functions in the pathway pyrimidine metabolism; dUMP biosynthesis; dUMP from dCTP (dUTP route): step 2/2. Functionally, this enzyme is involved in nucleotide metabolism: it produces dUMP, the immediate precursor of thymidine nucleotides and it decreases the intracellular concentration of dUTP so that uracil cannot be incorporated into DNA. The protein is Deoxyuridine 5'-triphosphate nucleotidohydrolase of Francisella tularensis subsp. tularensis (strain FSC 198).